The following is a 510-amino-acid chain: MDSSKEAALLALMDRTGYSMVQENGQRKFGGPPPGWEGPPPPRGREVFVGKIPRDMYEDELVPVFEQAGHIYEFRLMMEFSGENRGYAFVMYTTREKAQRAIQLLDNYEIRPGKFIGVCVSLDNCRLFIGSIPKDKKKEEIQEEMMKVTEGVMDVIVYPSAVDRMKNRGFAFVEYESHKAAAMARRKLIPGTFQLWGHTIQVDWAEPEKELDEETMQRVRVLYVRNLMLSTTEETLRSEFSQLKPGSVERVKKLTDYAFIHFYNREDALTALESMNGKVIDGSPIEVTLAKPASKDGNKRFGPRNCHNGVTAAGGYGDSNFLFRTRNDMTIGAMGNGLNAHALSLPYAVDLDRCVYPFLPGSTLVPVSLNTVKPSQLSSAVSLLDYYCHKNDWSLPEYHLYSLAGQEGKVMLIYKVVISSTRRSFMPDKVCTILEDAKELAAQNALWNLDCSSGSSLNVSPPAPSGSGFLSFGCRSLPYPAYPMASISPPLPISCSSAQRLFIPNQSSFL.

Residues 23–42 form a disordered region; sequence ENGQRKFGGPPPGWEGPPPP. The segment covering 31 to 42 has biased composition (pro residues); that stretch reads GPPPGWEGPPPP. 3 consecutive RRM domains span residues 45 to 123, 125 to 207, and 220 to 292; these read REVF…VSLD, CRLF…WAEP, and RVLY…LAKP.

Expressed in the testis and ovary.

It localises to the cytoplasm. In terms of biological role, essential for male and female fertility, playing a crucial role in regulating germ cell development by ensuring the proper progression of meiosis prophase I. The polypeptide is Probable RNA-binding protein 46 (rbm46) (Danio rerio (Zebrafish)).